Reading from the N-terminus, the 111-residue chain is Wound-induced proteinase inhibitor 1 (111 aa).

The signal sequence occupies residues 1–23; that stretch reads MESKFAHIIVFFLLATSFETLMA. A propeptide spanning residues 24 to 36 is cleaved from the precursor; the sequence is RKEIDGPEVIELL.

It belongs to the protease inhibitor I13 (potato type I serine protease inhibitor) family.

The protein resides in the secreted. The sequence is that of Wound-induced proteinase inhibitor 1 (PIIF) from Solanum lycopersicum (Tomato).